Here is a 248-residue protein sequence, read N- to C-terminus: Mannose-binding protein C (248 aa).

The N-terminal stretch at 1 to 20 is a signal peptide; it reads MSLFPSLTLLLLSVVATSYS. One can recognise a Collagen-like domain in the interval 42–99; it reads GINGFPGKDGRDGTKGEKGEPGQGLRGLQGPPGKLGPPGNPGSSGSPGPKGQKGDPGE. Residues 43–111 are disordered; sequence INGFPGKDGR…DCESSLAASE (69 aa). Pro-47 carries the post-translational modification 4-hydroxyproline. Residues 49–61 are compositionally biased toward basic and acidic residues; it reads KDGRDGTKGEKGE. 4 positions are modified to 4-hydroxyproline: Pro-73, Pro-79, Pro-82, and Pro-88. The segment covering 82-91 has biased composition (low complexity); it reads PGSSGSPGPK. Residues 112–130 are a coiled coil; the sequence is RKALQTEMARIKKWLTFSL. Residues 134–245 enclose the C-type lectin domain; the sequence is VGNKFFLTNG…CSSSHLALCE (112 aa). Cystine bridges form between Cys-155–Cys-244 and Cys-222–Cys-236.

Oligomeric complex of 3 or more homotrimers. Interacts with MASP1 and MASP2. Interacts with MEP1A and MEP1B and may inhibit their catalytic activity. In terms of processing, hydroxylation on proline residues within the sequence motif, GXPG, is most likely to be 4-hydroxy as this fits the requirement for 4-hydroxylation in vertebrates.

Its subcellular location is the secreted. In terms of biological role, calcium-dependent lectin involved in innate immune defense. Binds mannose, fucose and N-acetylglucosamine on different microorganisms and activates the lectin complement pathway. Binds to late apoptotic cells, as well as to apoptotic blebs and to necrotic cells, but not to early apoptotic cells, facilitating their uptake by macrophages. This is Mannose-binding protein C (MBL2) from Macaca fascicularis (Crab-eating macaque).